A 189-amino-acid chain; its full sequence is uncharacterized protein (189 aa).

The next 4 helical transmembrane spans lie at 35–55 (IIWY…AVMK), 97–117 (GVLQ…ALHF), 123–143 (WLLF…YEWT), and 144–164 (GNLF…ACQI).

It localises to the cell membrane. This is an uncharacterized protein from Bacillus subtilis (strain 168).